Reading from the N-terminus, the 295-residue chain is Virginiamycin B lyase (295 aa).

Position 228 (His-228) interacts with substrate. Glu-268 is a Mg(2+) binding site. His-270 functions as the Proton acceptor in the catalytic mechanism. Residue Glu-285 coordinates Mg(2+).

Belongs to the Vgb family. As to quaternary structure, monomer. Mg(2+) is required as a cofactor.

Its function is as follows. Inactivates the type B streptogramin antibiotics by linearizing the lactone ring at the ester linkage, generating a free phenylglycine carboxylate and converting the threonyl moiety into 2-amino-butenoic acid. This chain is Virginiamycin B lyase, found in Clostridium beijerinckii (strain ATCC 51743 / NCIMB 8052) (Clostridium acetobutylicum).